Here is a 537-residue protein sequence, read N- to C-terminus: Synaptotagmin-2 (537 aa).

The Cytoplasmic segment spans residues 1–2; that stretch reads MG. The chain crosses the membrane as a helical span at residues 3-23; the sequence is IISTILGVIGFGFGTTIGIVI. At 24–537 the chain is on the lumenal side; that stretch reads GYYLFIYFQS…QIELQWRNSS (514 aa). The SMP-LTD domain occupies 67 to 249; that stretch reads DFDRIDWLNK…WPKTLNVQIM (183 aa). Residues 227–505 are phospholipid binding; sequence QEIIKDQVAN…TLGYVVINLG (279 aa). C2 domains are found at residues 240–362 and 402–517; these read WPKT…LMTL and DPNA…NDKY. Residues aspartate 276, aspartate 282, aspartate 332, and glutamate 334 each contribute to the Ca(2+) site.

It belongs to the synaptotagmin family. The cofactor is Ca(2+).

Its subcellular location is the golgi apparatus membrane. In terms of biological role, may play an important role in regulating an unconventional protein trafficking from the cytosol to the extracellular matrix. The protein is Synaptotagmin-2 (SYT2) of Arabidopsis thaliana (Mouse-ear cress).